The chain runs to 792 residues: Glucocorticoid receptor (792 aa).

The segment covering 1–15 (MDSKESLAPPGRDEV) has biased composition (basic and acidic residues). Residues 1–25 (MDSKESLAPPGRDEVPSSLLGRGRG) are disordered. The segment at 1–436 (MDSKESLAPP…STATGPPPKL (436 aa)) is modulating. At Arg24 the chain carries Omega-N-methylarginine. Phosphoserine is present on Ser46. The tract at residues 67–98 (SKGSASNAQQQQQQQQQQQQQQQQQPQPDLSK) is disordered. The segment covering 75 to 94 (QQQQQQQQQQQQQQQQQPQP) has biased composition (low complexity). 3 positions are modified to phosphoserine: Ser131, Ser152, and Ser159. Polar residues predominate over residues 148-162 (NRSTSRPENPKSSTP). Positions 148-201 (NRSTSRPENPKSSTPAAGCATPTEKEFPQTHSDPSSEQQNRKSQPGTNGGSVKL) are disordered. Thr168 is modified (phosphothreonine). The segment covering 176–193 (QTHSDPSSEQQNRKSQPG) has biased composition (polar residues). Phosphoserine is present on residues Ser221, Ser229, Ser243, and Ser284. Glycyl lysine isopeptide (Lys-Gly) (interchain with G-Cter in SUMO); alternate cross-links involve residues Lys294 and Lys310. Glycyl lysine isopeptide (Lys-Gly) (interchain with G-Cter in SUMO2); alternate cross-links involve residues Lys294 and Lys310. Residues Ser324 and Ser421 each carry the phosphoserine modification. A DNA-binding region (nuclear receptor) is located at residues 434 to 509 (PKLCLVCSDE…AGMNLEARKT (76 aa)). A Glycyl lysine isopeptide (Lys-Gly) (interchain with G-Cter in ubiquitin) cross-link involves residue Lys435. NR C4-type zinc fingers lie at residues 437–457 (CLVC…CGSC) and 473–497 (CAGR…YRKC). Residues Lys496, Lys508, Lys510, and Lys511 each carry the N6-acetyllysine modification. Residues 501 to 792 (GMNLEARKTK…NIKKLLFHQK (292 aa)) are interaction with CLOCK. Positions 503–538 (NLEARKTKKKIKGIQQATAGVSQDTSENANKTIVPA) are hinge. Residues 539–773 (ALPQLTPTLV…FPEMLAEIIT (235 aa)) enclose the NR LBD domain. The interval 547-712 (LVSLLEVIEP…EIRMTYIKEL (166 aa)) is interaction with CRY1. Lys718 participates in a covalent cross-link: Glycyl lysine isopeptide (Lys-Gly) (interchain with G-Cter in SUMO).

The protein belongs to the nuclear hormone receptor family. NR3 subfamily. In terms of assembly, heteromultimeric cytoplasmic complex with HSP90AA1, HSPA1A/HSPA1B, and FKBP5 or another immunophilin such as PPID, STIP1, or the immunophilin homolog PPP5C. Upon ligand binding FKBP5 dissociates from the complex and FKBP4 takes its place, thereby linking the complex to dynein and mediating transport to the nucleus, where the complex dissociates. Probably forms a complex composed of chaperones HSP90 and HSP70, co-chaperones CDC37, PPP5C, TSC1 and client protein TSC2, CDK4, AKT, RAF1 and NR3C1; this complex does not contain co-chaperones STIP1/HOP and PTGES3/p23. Directly interacts with UNC45A. Binds to DNA as a homodimer, and as heterodimer with NR3C2 or the retinoid X receptor. Binds STAT5A and STAT5B homodimers and heterodimers. Interacts with NRIP1, POU2F1, POU2F2 and TRIM28. Interacts with several coactivator complexes, including the SMARCA4 complex, CREBBP/EP300, TADA2L (Ada complex) and p160 coactivators such as NCOA2 and NCOA6. Interaction with BAG1 inhibits transactivation. Interacts with HEXIM1 and TGFB1I1. Interacts with NCOA1. Interacts with NCOA3, SMARCA4, SMARCC1, SMARCD1, and SMARCE1. Interacts with CLOCK, CRY1 and CRY2 in a ligand-dependent fashion. Interacts with CIART. Interacts with RWDD3. Interacts with UBE2I/UBC9 and this interaction is enhanced in the presence of RWDD3. Interacts with GRIP1. Interacts with NR4A3 (via nuclear receptor DNA-binding domain), represses transcription activity of NR4A3 on the POMC promoter Nur response element (NurRE). Directly interacts with PNRC2 to attract and form a complex with UPF1 and DCP1A; the interaction leads to rapid mRNA degradation. Interacts with GSK3B. Interacts with FNIP1 and FNIP2. Interacts (via C-terminus) with HNRNPU (via C-terminus). Interacts with MCM3AP. Interacts (via domain NR LBD) with HSP90AA1 and HSP90AB1. In the absence of hormonal ligand, interacts with TACC1. Interacts (via NR LBD domain) with ZNF764 (via KRAB domain); the interaction regulates transcription factor activity of NR3C1 by directing its actions toward certain biologic pathways. Post-translationally, acetylation by CLOCK reduces its binding to glucocorticoid response elements and its transcriptional activity. In terms of processing, increased proteasome-mediated degradation in response to glucocorticoids. Phosphorylated in the absence of hormone; becomes hyperphosphorylated in the presence of glucocorticoids. Phosphorylated in the absence of hormone; becomes hyperphosphorylated in the presence of glucocorticoid. The Ser-221, Ser-243 and Ser-421-phosphorylated forms are mainly cytoplasmic, and the Ser-229-phosphorylated form is nuclear. Phosphorylation at Ser-229 increases transcriptional activity. Phosphorylation at Ser-221, Ser-243 and Ser-421 decreases signaling capacity. Phosphorylation at Ser-421 may protect from glucocorticoid-induced apoptosis. Phosphorylation at Ser-221 and Ser-229 is not required in regulation of chromosome segregation. May be dephosphorylated by PPP5C, attenuates NR3C1 action. Post-translationally, sumoylation at Lys-294 and Lys-310 negatively regulates its transcriptional activity. Sumoylation at Lys-718 positively regulates its transcriptional activity in the presence of RWDD3. Sumoylation at Lys-294 and Lys-310 is dispensable whereas sumoylation at Lys-718 is critical for the stimulatory effect of RWDD3 on its transcriptional activity. Heat shock increases sumoylation in a RWDD3-dependent manner. In terms of processing, ubiquitinated. Ubiquitination by UBR5 leads to its degradation: UBR5 specifically recognizes and binds ligand-bound NR3C1 when it is not associated with coactivators (NCOAs). In presence of NCOAs, the UBR5-degron is not accessible, preventing its ubiquitination and degradation. As to expression, expressed in spleen, kidney and liver. Expressed in a circadian manner in the liver. Expressed at highest level in spleen with lesser amounts in kidney and liver.

The protein resides in the cytoplasm. Its subcellular location is the nucleus. It localises to the mitochondrion. The protein localises to the cytoskeleton. It is found in the spindle. The protein resides in the microtubule organizing center. Its subcellular location is the centrosome. It localises to the chromosome. The protein localises to the nucleoplasm. Its function is as follows. Receptor for glucocorticoids (GC). Has a dual mode of action: as a transcription factor that binds to glucocorticoid response elements (GRE), both for nuclear and mitochondrial DNA, and as a modulator of other transcription factors. Affects inflammatory responses, cellular proliferation and differentiation in target tissues. Involved in chromatin remodeling. Plays a role in rapid mRNA degradation by binding to the 5' UTR of target mRNAs and interacting with PNRC2 in a ligand-dependent manner which recruits the RNA helicase UPF1 and the mRNA-decapping enzyme DCP1A, leading to RNA decay. Could act as a coactivator for STAT5-dependent transcription upon growth hormone (GH) stimulation and could reveal an essential role of hepatic GR in the control of body growth. Functionally, has transcriptional activation and repression activity. Mediates glucocorticoid-induced apoptosis. Promotes accurate chromosome segregation during mitosis. May act as a tumor suppressor. May play a negative role in adipogenesis through the regulation of lipolytic and antilipogenic gene expression. Acts as a dominant negative inhibitor of isoform 1. Has intrinsic transcriptional activity independent of isoform Alpha when both isoforms are coexpressed. Loses this transcription modulator function on its own. Has no hormone-binding activity. May play a role in controlling glucose metabolism by maintaining insulin sensitivity. Reduces hepatic gluconeogenesis through down-regulation of PEPCK in an isoform Alpha-dependent manner. Directly regulates STAT1 expression in isoform Alpha-independent manner. In Mus musculus (Mouse), this protein is Glucocorticoid receptor (Nr3c1).